Consider the following 179-residue polypeptide: Large ribosomal subunit protein uL6 (179 aa).

It belongs to the universal ribosomal protein uL6 family. As to quaternary structure, part of the 50S ribosomal subunit.

Functionally, this protein binds to the 23S rRNA, and is important in its secondary structure. It is located near the subunit interface in the base of the L7/L12 stalk, and near the tRNA binding site of the peptidyltransferase center. In Bifidobacterium longum (strain DJO10A), this protein is Large ribosomal subunit protein uL6.